Reading from the N-terminus, the 57-residue chain is UPF0391 membrane protein RPE_2138 (57 aa).

2 consecutive transmembrane segments (helical) span residues 4 to 24 (WVVT…GGIA) and 30 to 50 (IAKI…VIGL).

It belongs to the UPF0391 family.

Its subcellular location is the cell membrane. This chain is UPF0391 membrane protein RPE_2138, found in Rhodopseudomonas palustris (strain BisA53).